The chain runs to 456 residues: Bifunctional protein GlmU (456 aa).

A pyrophosphorylase region spans residues 1–229 (MTKKALSAVI…VMEVEGANNR (229 aa)). UDP-N-acetyl-alpha-D-glucosamine-binding positions include 11 to 14 (LAAG), K25, Q76, 81 to 82 (GT), 103 to 105 (YGD), G140, E154, N169, and N227. A Mg(2+)-binding site is contributed by D105. A Mg(2+)-binding site is contributed by N227. The linker stretch occupies residues 230–250 (LQLAALERYLQNKQASKLLLE). The interval 251 to 456 (GVMIYDPARF…QGWQRPIKKK (206 aa)) is N-acetyltransferase. R333 and K351 together coordinate UDP-N-acetyl-alpha-D-glucosamine. The active-site Proton acceptor is H363. Residues Y366 and N377 each contribute to the UDP-N-acetyl-alpha-D-glucosamine site. Residues A380, 386–387 (NY), S405, A423, and R440 contribute to the acetyl-CoA site.

It in the N-terminal section; belongs to the N-acetylglucosamine-1-phosphate uridyltransferase family. The protein in the C-terminal section; belongs to the transferase hexapeptide repeat family. In terms of assembly, homotrimer. It depends on Mg(2+) as a cofactor.

Its subcellular location is the cytoplasm. It carries out the reaction alpha-D-glucosamine 1-phosphate + acetyl-CoA = N-acetyl-alpha-D-glucosamine 1-phosphate + CoA + H(+). The catalysed reaction is N-acetyl-alpha-D-glucosamine 1-phosphate + UTP + H(+) = UDP-N-acetyl-alpha-D-glucosamine + diphosphate. Its pathway is nucleotide-sugar biosynthesis; UDP-N-acetyl-alpha-D-glucosamine biosynthesis; N-acetyl-alpha-D-glucosamine 1-phosphate from alpha-D-glucosamine 6-phosphate (route II): step 2/2. It participates in nucleotide-sugar biosynthesis; UDP-N-acetyl-alpha-D-glucosamine biosynthesis; UDP-N-acetyl-alpha-D-glucosamine from N-acetyl-alpha-D-glucosamine 1-phosphate: step 1/1. It functions in the pathway bacterial outer membrane biogenesis; LPS lipid A biosynthesis. Its function is as follows. Catalyzes the last two sequential reactions in the de novo biosynthetic pathway for UDP-N-acetylglucosamine (UDP-GlcNAc). The C-terminal domain catalyzes the transfer of acetyl group from acetyl coenzyme A to glucosamine-1-phosphate (GlcN-1-P) to produce N-acetylglucosamine-1-phosphate (GlcNAc-1-P), which is converted into UDP-GlcNAc by the transfer of uridine 5-monophosphate (from uridine 5-triphosphate), a reaction catalyzed by the N-terminal domain. The sequence is that of Bifunctional protein GlmU from Haemophilus influenzae (strain PittEE).